The chain runs to 253 residues: CD151 antigen (253 aa).

Residues 1 to 18 (MGEFNEKKTTCGTVCLKY) are Cytoplasmic-facing. 2 S-palmitoyl cysteine lipidation sites follow: Cys11 and Cys15. The helical transmembrane segment at 19-39 (LLFTYNCCFWLAGLAVMAVGI) threads the bilayer. The Extracellular portion of the chain corresponds to 40-57 (WTLALKSDYISLLASGTY). Residues 58–78 (LATAYILVVAGAVVMVTGVLG) traverse the membrane as a helical segment. Residues 79 to 91 (CCATFKERRNLLR) lie on the Cytoplasmic side of the membrane. The helical transmembrane segment at 92–112 (LYFILLLIIFLLEIIAGVLAY) threads the bilayer. At 113-221 (VYYQQLNTEL…LETFIQEHLR (109 aa)) the chain is on the extracellular side. Asn159 carries N-linked (GlcNAc...) asparagine glycosylation. The chain crosses the membrane as a helical span at residues 222-242 (VIGAVGTGIACVQVFGMIFTC). Residues Cys242 and Cys243 are each lipidated (S-palmitoyl cysteine). The Cytoplasmic segment spans residues 243-253 (CLYRSLKLEHY).

Belongs to the tetraspanin (TM4SF) family. Interacts with integrins ITGA3:ITGB1, ITGA5:ITGB1, ITGA3:ITGB1 and ITGA6:ITGB4 and with CD9 and CD181. Interacts (via the second extracellular domain) with integrin ITGAV:ITGB3. Interacts with ITGA3; this interaction modulates ITGA3 glycosylation pattern. Interacts with F11R. Interacts with RAC1 and CDC42; these interactions mediate physical association of RAC1 and CDC42 with integrin adhesion receptor complexes. Palmitoylated. Palmitoylation by ZDHHC2 regulates CD151 expression, association with other tetraspanin family proteins and function in cell adhesion. Post-translationally, ubiquitinated by RNF128 on lysine residues present in the tetraspanin amino terminus via 'Lys-48'-linked ubiquitin leading to proteasomal degradation.

The protein resides in the cell membrane. Functionally, structural component of specialized membrane microdomains known as tetraspanin-enriched microdomains (TERMs), which act as platforms for receptor clustering and signaling. Plays a role in various cellular and molecular mechanism through its association with both integrin and non-integrin proteins. These interactions facilitate critical cellular functions, including cell-to-cell communication, wound healing, platelet aggregation, trafficking, cell motility, and angiogenesis. Via interaction with JAM-A/F11R and integrin ITGA3:ITGB1, promotes the recruitment of signaling molecules such as RAC1, CDC42 and RhoGTPases to facilitate the polarization of epithelial cells and the reorganization of the actin cytoskeleton, which are critical steps in cell migration process. Regulates the glycosylation pattern of ITGA3:ITGB1 thereby modulating its activity. Plays an essential role in the maintenance of central laminin-binding integrin ITGA6:ITGB4-containing adhesion complexes. Essential for the proper assembly of the glomerular and tubular basement membranes in kidney. Contributes to T-cell activation by modulating integrin signaling leading to activation of downstream targets PTK2 and MAPK1/MAPK3. The chain is CD151 antigen (CD151) from Chlorocebus aethiops (Green monkey).